A 167-amino-acid chain; its full sequence is DNA-directed RNA polymerase II subunit rpb-9 (167 aa).

The disordered stretch occupies residues 28 to 49 (DDMYDQNGASPAPSQNEKPGKS). Residues 34–44 (NGASPAPSQNE) are compositionally biased toward polar residues. Cys-59, Cys-62, Cys-81, Cys-84, Cys-128, Cys-131, Cys-156, and Cys-161 together coordinate Zn(2+). The C4-type zinc finger occupies 59–84 (CPECNNMLYPREDKESRVLMYSCRNC). The TFIIS-type zinc finger occupies 124-166 (EEHQCPVCGKSKAVFFQAQTKKAEEEMRLYYVCASQDCQHRWT).

It belongs to the archaeal RpoM/eukaryotic RPA12/RPB9/RPC11 RNA polymerase family. Component of the RNA polymerase II (Pol II) complex consisting of 12 subunits. As to expression, expressed in the soma and in the germline.

The protein localises to the nucleus. The protein resides in the nucleolus. Functionally, DNA-dependent RNA polymerase catalyzes the transcription of DNA into RNA using the four ribonucleoside triphosphates as substrates. Component of RNA polymerase II which synthesizes mRNA precursors and many functional non-coding RNAs. Pol II is the central component of the basal RNA polymerase II transcription machinery. It is composed of mobile elements that move relative to each other. RPB9 is part of the upper jaw surrounding the central large cleft and thought to grab the incoming DNA template. Recruits ints-6, a component of the Integrator complex to PIWI-interacting RNA (piRNA) genes, to mediate Integrator complex-dependent cleavage of 3' ends of nascent transcripts upon RNA Pol II backtracking to terminate transcription and generate piRNA precursors. Promotes the biogenesis of secondary 22G-siRNAs (a class of 22 nucleotide siRNAs that possess a triphosphorylated guanine residue at the 5'-end). Involved in gene silencing mediated by a class of 21 nucleotide piRNAs that possess a uracil residue at the 5'-end (also called 21U-RNAs) and guide the Piwi protein prg-1 to its DNA targets for silencing. Plays a role in small RNA-directed transgenerational epigenetic inheritance (also called RNAe) over several generations. Not required for the transgenerational inheritance of exogenous small interfering RNAs (RNAi). May play a role in the silencing of the DNA transposable elements from the DNA transposon families, Chapaev-2 and CEMUDR1. This is DNA-directed RNA polymerase II subunit rpb-9 from Caenorhabditis elegans.